Consider the following 476-residue polypeptide: Aspartyl/glutamyl-tRNA(Asn/Gln) amidotransferase subunit B (476 aa).

Belongs to the GatB/GatE family. GatB subfamily. As to quaternary structure, heterotrimer of A, B and C subunits.

It carries out the reaction L-glutamyl-tRNA(Gln) + L-glutamine + ATP + H2O = L-glutaminyl-tRNA(Gln) + L-glutamate + ADP + phosphate + H(+). The catalysed reaction is L-aspartyl-tRNA(Asn) + L-glutamine + ATP + H2O = L-asparaginyl-tRNA(Asn) + L-glutamate + ADP + phosphate + 2 H(+). In terms of biological role, allows the formation of correctly charged Asn-tRNA(Asn) or Gln-tRNA(Gln) through the transamidation of misacylated Asp-tRNA(Asn) or Glu-tRNA(Gln) in organisms which lack either or both of asparaginyl-tRNA or glutaminyl-tRNA synthetases. The reaction takes place in the presence of glutamine and ATP through an activated phospho-Asp-tRNA(Asn) or phospho-Glu-tRNA(Gln). The polypeptide is Aspartyl/glutamyl-tRNA(Asn/Gln) amidotransferase subunit B (Clostridium botulinum (strain Alaska E43 / Type E3)).